We begin with the raw amino-acid sequence, 269 residues long: Tryptophan synthase alpha chain (269 aa).

Active-site proton acceptor residues include Glu49 and Asp60.

This sequence belongs to the TrpA family. Tetramer of two alpha and two beta chains.

It catalyses the reaction (1S,2R)-1-C-(indol-3-yl)glycerol 3-phosphate + L-serine = D-glyceraldehyde 3-phosphate + L-tryptophan + H2O. It functions in the pathway amino-acid biosynthesis; L-tryptophan biosynthesis; L-tryptophan from chorismate: step 5/5. Its function is as follows. The alpha subunit is responsible for the aldol cleavage of indoleglycerol phosphate to indole and glyceraldehyde 3-phosphate. The polypeptide is Tryptophan synthase alpha chain (Enterobacter sp. (strain 638)).